The following is a 337-amino-acid chain: uncharacterized protein (337 aa).

Positions Asn248–Leu276 form a coiled coil. The disordered stretch occupies residues Gly285–Leu337. A compositionally biased stretch (basic and acidic residues) spans Arg287 to Glu296. The segment covering Thr297–Thr315 has biased composition (polar residues).

This is an uncharacterized protein from Invertebrate iridescent virus 3 (IIV-3).